The following is a 319-amino-acid chain: ATP-dependent 6-phosphofructokinase (319 aa).

Gly11 is an ATP binding site. Residues 21–25 (RSVVR) and Asp59 each bind ADP. ATP contacts are provided by residues 72–73 (RC) and 102–105 (GDGS). Asp103 is a binding site for Mg(2+). Substrate is bound at residue 125–127 (TID). The Proton acceptor role is filled by Asp127. Arg154 is a binding site for ADP. Residues Arg162 and 169-171 (MGR) each bind substrate. Residues 185-187 (GAE), Arg211, and 213-215 (KKH) each bind ADP. Substrate contacts are provided by residues Glu222, Arg243, and 249-252 (HVQR).

This sequence belongs to the phosphofructokinase type A (PFKA) family. ATP-dependent PFK group I subfamily. Prokaryotic clade 'B1' sub-subfamily. In terms of assembly, homotetramer. Requires Mg(2+) as cofactor.

It localises to the cytoplasm. The enzyme catalyses beta-D-fructose 6-phosphate + ATP = beta-D-fructose 1,6-bisphosphate + ADP + H(+). It participates in carbohydrate degradation; glycolysis; D-glyceraldehyde 3-phosphate and glycerone phosphate from D-glucose: step 3/4. Its activity is regulated as follows. Allosterically activated by ADP and other diphosphonucleosides, and allosterically inhibited by phosphoenolpyruvate. Functionally, catalyzes the phosphorylation of D-fructose 6-phosphate to fructose 1,6-bisphosphate by ATP, the first committing step of glycolysis. This Geobacillus stearothermophilus (Bacillus stearothermophilus) protein is ATP-dependent 6-phosphofructokinase.